The following is a 237-amino-acid chain: Ribosomal RNA small subunit methyltransferase G (237 aa).

Residues Gly-78, Phe-83, Ala-129–Glu-130, and Arg-148 contribute to the S-adenosyl-L-methionine site. The segment at Lys-218–Leu-237 is disordered.

Belongs to the methyltransferase superfamily. RNA methyltransferase RsmG family.

Its subcellular location is the cytoplasm. Functionally, specifically methylates the N7 position of a guanine in 16S rRNA. The polypeptide is Ribosomal RNA small subunit methyltransferase G (Streptococcus pneumoniae (strain ATCC BAA-255 / R6)).